The primary structure comprises 241 residues: Proteasome subunit alpha type-5 (241 aa).

The residue at position 1 (Met-1) is an N-acetylmethionine. The residue at position 16 (Ser-16) is a Phosphoserine. Thr-55 is subject to Phosphothreonine. A phosphoserine mark is found at Ser-56 and Ser-63. Residue Ser-198 is glycosylated (O-linked (GlcNAc) serine).

Belongs to the peptidase T1A family. The 26S proteasome consists of a 20S proteasome core and two 19S regulatory subunits. The 20S proteasome core is a barrel-shaped complex made of 28 subunits that are arranged in four stacked rings. The two outer rings are each formed by seven alpha subunits, and the two inner rings are formed by seven beta subunits. The proteolytic activity is exerted by three beta-subunits PSMB5, PSMB6 and PSMB7. PSMA5 interacts directly with the PSMG1-PSMG2 heterodimer which promotes 20S proteasome assembly.

The protein localises to the cytoplasm. Its subcellular location is the nucleus. In terms of biological role, component of the 20S core proteasome complex involved in the proteolytic degradation of most intracellular proteins. This complex plays numerous essential roles within the cell by associating with different regulatory particles. Associated with two 19S regulatory particles, forms the 26S proteasome and thus participates in the ATP-dependent degradation of ubiquitinated proteins. The 26S proteasome plays a key role in the maintenance of protein homeostasis by removing misfolded or damaged proteins that could impair cellular functions, and by removing proteins whose functions are no longer required. Associated with the PA200 or PA28, the 20S proteasome mediates ubiquitin-independent protein degradation. This type of proteolysis is required in several pathways including spermatogenesis (20S-PA200 complex) or generation of a subset of MHC class I-presented antigenic peptides (20S-PA28 complex). This Bos taurus (Bovine) protein is Proteasome subunit alpha type-5 (PSMA5).